The primary structure comprises 1219 residues: Cullin-associated NEDD8-dissociated protein 1 (1219 aa).

Residue Ala-2 is modified to N-acetylalanine. HEAT repeat units follow at residues 44–81 (DLEVRLSSIILQQLDDVAGDVSGLAVKCLAPLVKKVGE), 83–119 (RIVEMTNKLCDKLLHGKDQHRDTASIALRTVVAQIAP), 209–244 (KATVEVVKNLSNRNAKSEITRTNIQMIGALCRAVGY), 248–288 (THLG…RCPR), 327–363 (EEDDESANEYTDDEDASWKVRRAAAKCLAGLIVSRSE), 367–404 (KVYQEACPKLIDRFKEREENVKMDVFNTFIDLLRQTGN), 423–460 (QEVSKIVKSINRQLREKSVKTKVGAFSVLRELVVVLPD), 464–503 (DHIGSLVPGIERALNDKSSTSNLKIEALVFTKLVLASHAP), 599–636 (AELPSCLPVLVDRMGNEITRLTAVKAFSVIATSPLHIN), 639–676 (CVLDHLIAELTGFLRKANRVLRQATLITMNTLVTAYGD), 808–848 (KNCS…RKDL), 850–883 (AHAGIETIVIESFQSPFEEIKSAASYALGNIAVG), 927–964 (SSVEKILALLFNHCESEEEGVRNVVAECLGKMALIEPE), 966–998 (LVPALQVRTTSPAAFTRATVVTAVKYSVVERPE), 1002–1039 (EIIFPQISSFLMLIKDGDRHVRRAAVSALSTFAHYKPN), 1043–1079 (GLLPELLPLLYDQTVIKKELIRTVDLGPFKHVVDDGL), 1101–1137 (NPSSFIVPFLKSGLEDHYDLKMLCHLILSLLADKCPS), and 1141–1180 (AVLDSLVEPLHKTISFKPKQDAVKQEHDRNEDMIRSALRA). Positions 311 to 340 (FTDNMEEDTDNETLEDEEDDESANEYTDDE) are disordered. The span at 314-340 (NMEEDTDNETLEDEEDDESANEYTDDE) shows a compositional bias: acidic residues.

This sequence belongs to the CAND family. As to quaternary structure, interacts with CUL1 and CUL4. Binds unneddylated CUL1, but cannot bind CUL1 once it has been neddylated. As to expression, highly expressed in roots. Expressed in stems, flowers and siliques.

Functionally, key assembly factor of SCF (SKP1-CUL1-F-box protein) E3 ubiquitin ligase complexes that promotes the exchange of the substrate-recognition F-box subunit in SCF complexes, thereby playing a key role in the cellular repertoire of SCF complexes. Acts as a F-box protein exchange factor. Required for SCF(TIR1) function. Modulates SCF(TIR1) function through its interactions with the CUL1 subunit. Represses photomorphogenesis by promoting HY5 degradation in darkness. The polypeptide is Cullin-associated NEDD8-dissociated protein 1 (CAND1) (Arabidopsis thaliana (Mouse-ear cress)).